We begin with the raw amino-acid sequence, 295 residues long: F-box only protein 6 (295 aa).

The 48-residue stretch at 1-48 folds into the F-box domain; the sequence is MVHINELPENILLELFIHIPAPQLLRNCRLVCRLWRDLIDVVSLWKRK. The FBA domain maps to 69-250; it reads FYILCSLQRN…VTNSSIIISH (182 aa). Phosphoserine occurs at positions 249 and 276. At threonine 280 the chain carries Phosphothreonine.

Interacts with CHEK1 and CUL1. Part of a SCF (SKP1-cullin-F-box) protein ligase complex. Interacts with VCP. In terms of tissue distribution, present in liver and kidney (at protein level). Widely expressed.

Its subcellular location is the cytoplasm. It participates in protein modification; protein ubiquitination. Substrate-recognition component of some SCF (SKP1-CUL1-F-box protein)-type E3 ubiquitin ligase complexes. Involved in DNA damage response by specifically recognizing activated CHEK1 (phosphorylated on 'Ser-345'), promoting its ubiquitination and degradation. Ubiquitination of CHEK1 is required to ensure that activated CHEK1 does not accumulate as cells progress through S phase, or when replication forks encounter transient impediments during normal DNA replication. Involved in endoplasmic reticulum-associated degradation pathway (ERAD) for misfolded lumenal proteins by recognizing and binding sugar chains on unfolded glycoproteins that are retrotranslocated into the cytosol and promoting their ubiquitination and subsequent degradation. Able to recognize and bind denatured glycoproteins, which are modified with not only high-mannose but also complex-type oligosaccharides. Also recognizes sulfated glycans. This Mus musculus (Mouse) protein is F-box only protein 6 (Fbxo6).